Here is a 608-residue protein sequence, read N- to C-terminus: 1-deoxy-D-xylulose-5-phosphate synthase (608 aa).

Thiamine diphosphate-binding positions include H66 and 107–109 (GHA). D138 contacts Mg(2+). Residues 139–140 (GA), N167, F277, and E350 each bind thiamine diphosphate. N167 contacts Mg(2+).

The protein belongs to the transketolase family. DXPS subfamily. In terms of assembly, homodimer. The cofactor is Mg(2+). Requires thiamine diphosphate as cofactor.

It catalyses the reaction D-glyceraldehyde 3-phosphate + pyruvate + H(+) = 1-deoxy-D-xylulose 5-phosphate + CO2. It participates in metabolic intermediate biosynthesis; 1-deoxy-D-xylulose 5-phosphate biosynthesis; 1-deoxy-D-xylulose 5-phosphate from D-glyceraldehyde 3-phosphate and pyruvate: step 1/1. Catalyzes the acyloin condensation reaction between C atoms 2 and 3 of pyruvate and glyceraldehyde 3-phosphate to yield 1-deoxy-D-xylulose-5-phosphate (DXP). In Thermotoga sp. (strain RQ2), this protein is 1-deoxy-D-xylulose-5-phosphate synthase.